Here is a 207-residue protein sequence, read N- to C-terminus: ATP-dependent Clp protease proteolytic subunit 1 (207 aa).

Ser-103 serves as the catalytic Nucleophile. Residue His-128 is part of the active site.

The protein belongs to the peptidase S14 family. As to quaternary structure, fourteen ClpP subunits assemble into 2 heptameric rings which stack back to back to give a disk-like structure with a central cavity, resembling the structure of eukaryotic proteasomes.

It localises to the cytoplasm. The catalysed reaction is Hydrolysis of proteins to small peptides in the presence of ATP and magnesium. alpha-casein is the usual test substrate. In the absence of ATP, only oligopeptides shorter than five residues are hydrolyzed (such as succinyl-Leu-Tyr-|-NHMec, and Leu-Tyr-Leu-|-Tyr-Trp, in which cleavage of the -Tyr-|-Leu- and -Tyr-|-Trp bonds also occurs).. Cleaves peptides in various proteins in a process that requires ATP hydrolysis. Has a chymotrypsin-like activity. Plays a major role in the degradation of misfolded proteins. This chain is ATP-dependent Clp protease proteolytic subunit 1, found in Synechococcus sp. (strain CC9605).